The primary structure comprises 182 residues: UPF0316 protein BCB4264_A3368 (182 aa).

A run of 3 helical transmembrane segments spans residues 6-26, 32-52, and 58-78; these read LIFVLQIIYVPILTIRTILLV, SAAGVGLLEGAIYIVSLGIVF, and WMNIVAYVIGFSAGLLLGGYI.

The protein belongs to the UPF0316 family.

Its subcellular location is the cell membrane. The protein is UPF0316 protein BCB4264_A3368 of Bacillus cereus (strain B4264).